The sequence spans 172 residues: Ribosome maturation factor RimM (172 aa).

Positions 93 to 167 (DEHEFYYHEI…RVVITPIPGM (75 aa)) constitute a PRC barrel domain.

The protein belongs to the RimM family. Binds ribosomal protein uS19.

It localises to the cytoplasm. Its function is as follows. An accessory protein needed during the final step in the assembly of 30S ribosomal subunit, possibly for assembly of the head region. Essential for efficient processing of 16S rRNA. May be needed both before and after RbfA during the maturation of 16S rRNA. It has affinity for free ribosomal 30S subunits but not for 70S ribosomes. In Exiguobacterium sp. (strain ATCC BAA-1283 / AT1b), this protein is Ribosome maturation factor RimM.